A 130-amino-acid polypeptide reads, in one-letter code: MAKVPSRSPRKRVRKQVADGMAHIHASFNNTIVTITDRQGNALSWATSGGSGFRGSRKSTPFAAQVAAERAGIAAQDYGVKNLEVFVKGPGPGRESAIRALNAVGYKITNITDVTPIPHNGCRPPKKRRV.

Belongs to the universal ribosomal protein uS11 family. As to quaternary structure, part of the 30S ribosomal subunit. Interacts with proteins S7 and S18. Binds to IF-3.

Its function is as follows. Located on the platform of the 30S subunit, it bridges several disparate RNA helices of the 16S rRNA. Forms part of the Shine-Dalgarno cleft in the 70S ribosome. The chain is Small ribosomal subunit protein uS11 from Shewanella frigidimarina (strain NCIMB 400).